Reading from the N-terminus, the 353-residue chain is Bone morphogenetic protein 2 (353 aa).

The propeptide occupies Gly-1 to Arg-239. Asn-91, Asn-121, and Asn-157 each carry an N-linked (GlcNAc...) asparagine glycan. The disordered stretch occupies residues Gly-228–Arg-248. The span at His-231 to Arg-248 shows a compositional bias: basic residues. Disulfide bonds link Cys-253–Cys-318, Cys-282–Cys-350, and Cys-286–Cys-352. Asn-295 carries an N-linked (GlcNAc...) asparagine glycan.

This sequence belongs to the TGF-beta family. Homodimer; disulfide-linked.

It localises to the secreted. In terms of biological role, negatively regulates the structure and function of the limb apical ectodermal ridge. This is Bone morphogenetic protein 2 (BMP2) from Gallus gallus (Chicken).